A 320-amino-acid chain; its full sequence is MQTRNTFSWIKEQITRSISASLMIYIITRTSISNAYPIFAQQGYENPREATGRIVCANCHLANKPVDIEVPQAVLPDTVFEAVVRIPYDTQLKQVLANGKKGGLNVGAVLILPEGFELAPPDRISPEIKEKMGNLSFQSYRPNQKNILVIGPVPGQKYSEITFPILSPDPATKKDIHFLKYPIYVGGNRGRGQIYPDGSKSNNTVYNATASGIVSKILRKEKGGYEITIADASDGRQVVDIIPPGPELLVSEGESIKLDQPLTSNPNVGGFGQGDAEIVLQDPLRVQGLLFFFAAVILAQIFLVLKKKQFEKVQLSEMNF.

Positions 1–35 are cleaved as a signal peptide; that stretch reads MQTRNTFSWIKEQITRSISASLMIYIITRTSISNA. Heme contacts are provided by Tyr-36, Cys-56, Cys-59, and His-60. The helical transmembrane segment at 286 to 306 threads the bilayer; the sequence is VQGLLFFFAAVILAQIFLVLK.

This sequence belongs to the cytochrome f family. As to quaternary structure, the 4 large subunits of the cytochrome b6-f complex are cytochrome b6, subunit IV (17 kDa polypeptide, petD), cytochrome f and the Rieske protein, while the 4 small subunits are PetG, PetL, PetM and PetN. The complex functions as a dimer. Heme serves as cofactor.

It is found in the plastid. The protein localises to the chloroplast thylakoid membrane. In terms of biological role, component of the cytochrome b6-f complex, which mediates electron transfer between photosystem II (PSII) and photosystem I (PSI), cyclic electron flow around PSI, and state transitions. The polypeptide is Cytochrome f (Helianthus annuus (Common sunflower)).